The sequence spans 322 residues: Basic 30 kDa endochitinase (322 aa).

Residues methionine 1 to alanine 22 form the signal peptide. The 42-residue stretch at glutamate 23 to glycine 64 folds into the Chitin-binding type-1 domain. Intrachain disulfides connect cysteine 25-cysteine 40, cysteine 34-cysteine 46, cysteine 39-cysteine 53, and cysteine 58-cysteine 62. Proline 66 and proline 68 each carry 4-hydroxyproline. 3 cysteine pairs are disulfide-bonded: cysteine 93–cysteine 156, cysteine 168–cysteine 176, and cysteine 275–cysteine 307. Glutamate 138 functions as the Proton donor in the catalytic mechanism. Positions glycine 316 to methionine 322 are cleaved as a propeptide — removed in mature form.

The protein belongs to the glycosyl hydrolase 19 family. Chitinase class I subfamily. Post-translationally, the 4-hydroxyproline residues are not glycosylated in this plant vacuolar protein.

Its subcellular location is the vacuole. It is found in the secreted. The protein resides in the cell wall. It catalyses the reaction Random endo-hydrolysis of N-acetyl-beta-D-glucosaminide (1-&gt;4)-beta-linkages in chitin and chitodextrins.. Defense against chitin-containing fungal pathogens. The polypeptide is Basic 30 kDa endochitinase (CHI9) (Solanum lycopersicum (Tomato)).